Consider the following 226-residue polypeptide: ATP-dependent dethiobiotin synthetase BioD (226 aa).

Thr-19 serves as a coordination point for Mg(2+). Lys-40 is a catalytic residue. Residues Asp-53 and Glu-114 each coordinate Mg(2+). Residues Asp-53, 114–117 (EGAG), and 174–175 (NR) each bind ATP.

It belongs to the dethiobiotin synthetase family. As to quaternary structure, homodimer. It depends on Mg(2+) as a cofactor.

It localises to the cytoplasm. It carries out the reaction (7R,8S)-7,8-diammoniononanoate + CO2 + ATP = (4R,5S)-dethiobiotin + ADP + phosphate + 3 H(+). It participates in cofactor biosynthesis; biotin biosynthesis; biotin from 7,8-diaminononanoate: step 1/2. Catalyzes a mechanistically unusual reaction, the ATP-dependent insertion of CO2 between the N7 and N8 nitrogen atoms of 7,8-diaminopelargonic acid (DAPA, also called 7,8-diammoniononanoate) to form a ureido ring. The polypeptide is ATP-dependent dethiobiotin synthetase BioD (Nitrosospira multiformis (strain ATCC 25196 / NCIMB 11849 / C 71)).